A 128-amino-acid chain; its full sequence is Ribonuclease P protein component (128 aa).

The protein belongs to the RnpA family. Consists of a catalytic RNA component (M1 or rnpB) and a protein subunit.

It carries out the reaction Endonucleolytic cleavage of RNA, removing 5'-extranucleotides from tRNA precursor.. Its function is as follows. RNaseP catalyzes the removal of the 5'-leader sequence from pre-tRNA to produce the mature 5'-terminus. It can also cleave other RNA substrates such as 4.5S RNA. The protein component plays an auxiliary but essential role in vivo by binding to the 5'-leader sequence and broadening the substrate specificity of the ribozyme. The sequence is that of Ribonuclease P protein component from Prochlorococcus marinus (strain NATL1A).